The following is a 188-amino-acid chain: MVHYKLMCFDVRGLGEVIRQLFYLGDVSFEDFRVSREEFKSLKSNLPSGQLPVLEIDGVMISQSASIGRFLARQYGYSGKTPTEEMQVDSIIDLFKDFMLTFRQFFFAVIHGYPEYEKERMKRDIVKPAIKNYFIALNKILLRSKSGFLVGDDLTWADLQIADNLSTLINIRLFAEKEPHLNVFIRKL.

The GST N-terminal domain occupies 2–79 (VHYKLMCFDV…FLARQYGYSG (78 aa)). Glutathione contacts are provided by residues Lys-43, 49–51 (GQL), and 63–64 (QS). A GST C-terminal domain is found at 81-188 (TPTEEMQVDS…PHLNVFIRKL (108 aa)).

This sequence belongs to the GST superfamily. Sigma family.

The enzyme catalyses RX + glutathione = an S-substituted glutathione + a halide anion + H(+). In terms of biological role, conjugation of reduced glutathione to a wide number of exogenous and endogenous hydrophobic electrophiles. In Caenorhabditis elegans, this protein is Glutathione S-transferase 2 (gst-2).